The primary structure comprises 290 residues: Agmatinase (290 aa).

Positions 112, 135, 137, 139, 216, and 218 each coordinate Mn(2+).

This sequence belongs to the arginase family. Agmatinase subfamily. Mn(2+) is required as a cofactor.

It carries out the reaction agmatine + H2O = urea + putrescine. Its pathway is amine and polyamine biosynthesis; putrescine biosynthesis via agmatine pathway; putrescine from agmatine: step 1/1. Catalyzes the formation of putrescine from agmatine. This is Agmatinase (speB) from Bacillus cereus (strain ATCC 14579 / DSM 31 / CCUG 7414 / JCM 2152 / NBRC 15305 / NCIMB 9373 / NCTC 2599 / NRRL B-3711).